The primary structure comprises 455 residues: Retinoic acid receptor beta (455 aa).

A modulating region spans residues 1 to 87 (MTTSGHACPV…PLPPPRVYKP (87 aa)). The tract at residues 47–78 (HPPPSGCSTPSPATIETQSTSSEELVPSPPSP) is disordered. The span at 53-66 (CSTPSPATIETQST) shows a compositional bias: polar residues. S77 is subject to Phosphoserine. 2 NR C4-type zinc fingers span residues 88-108 (CFVCQDKSSGYHYGVSACEGC) and 124-148 (CHRDKNCVINKVTRNRCQYCRLQKC). The segment at residues 88–153 (CFVCQDKSSG…RLQKCFEVGM (66 aa)) is a DNA-binding region (nuclear receptor). A hinge region spans residues 154–182 (SKESVRNDRNKKKKETSKQECTESYEMTA). One can recognise an NR LBD domain in the interval 183–417 (ELDDLTEKIR…PLIQEMLENS (235 aa)). The interval 415-455 (ENSEGHEPLTPSSSGNTAEHSPSISPSSVENSGVSQSPLVQ) is disordered. The span at 424–434 (TPSSSGNTAEH) shows a compositional bias: polar residues. Low complexity predominate over residues 435–455 (SPSISPSSVENSGVSQSPLVQ).

Belongs to the nuclear hormone receptor family. NR1 subfamily. Homodimer. Heterodimer; with a RXR molecule. Binds DNA preferentially as a RAR/RXR heterodimer. Heterodimerizes (via NR LBD) with RXRA. Interacts weakly with NCOR2. Expressed in aortic endothelial cells (at protein level).

The protein resides in the nucleus. Its subcellular location is the cytoplasm. Receptor for retinoic acid. Retinoic acid receptors bind as heterodimers to their target response elements in response to their ligands, all-trans or 9-cis retinoic acid, and regulate gene expression in various biological processes. The RXR/RAR heterodimers bind to the retinoic acid response elements (RARE) composed of tandem 5'-AGGTCA-3' sites known as DR1-DR5. In the absence or presence of hormone ligand, acts mainly as an activator of gene expression due to weak binding to corepressors. The RXRA/RARB heterodimer can act as a repressor on the DR1 element and as an activator on the DR5 element. In concert with RARG, required for skeletal growth, matrix homeostasis and growth plate function. This is Retinoic acid receptor beta (RARB) from Homo sapiens (Human).